The primary structure comprises 261 residues: Acyl-[acyl-carrier-protein]--UDP-N-acetylglucosamine O-acyltransferase (261 aa).

Belongs to the transferase hexapeptide repeat family. LpxA subfamily. In terms of assembly, homotrimer.

It localises to the cytoplasm. The catalysed reaction is a (3R)-hydroxyacyl-[ACP] + UDP-N-acetyl-alpha-D-glucosamine = a UDP-3-O-[(3R)-3-hydroxyacyl]-N-acetyl-alpha-D-glucosamine + holo-[ACP]. Its pathway is glycolipid biosynthesis; lipid IV(A) biosynthesis; lipid IV(A) from (3R)-3-hydroxytetradecanoyl-[acyl-carrier-protein] and UDP-N-acetyl-alpha-D-glucosamine: step 1/6. Functionally, involved in the biosynthesis of lipid A, a phosphorylated glycolipid that anchors the lipopolysaccharide to the outer membrane of the cell. This Paracoccus denitrificans (strain Pd 1222) protein is Acyl-[acyl-carrier-protein]--UDP-N-acetylglucosamine O-acyltransferase.